We begin with the raw amino-acid sequence, 706 residues long: MLMTASQQDQHAKMYLADIHRALRIPSPIPSTDYECSDYASTIASISRESTMRNFNRSNISSTAPSFAESEDAEDGDSFPYDQTLSNSSSFDDHQSLLPFSTEVRRTPTYSVMNETDSSSTSVEDVNKENILSLNDSCLIKLSDDEASNKSSRSSTPRNSIKSNSSNQGHGDIPIPKKNPARSVCNSKLFNEDTLPAEFEEVSISPPVKLELPTHSHNSSDTSFTNSIVSSVSDMVGLGEGINSIASFGFSEDSSSFQDIKTPPRLSFADENRENCRTDIYRSDSIHEYEEPLTSSITSLDSPHVLDENAPIPLLPKVVSLPDPRFTNVLSAFDALTRTYLLRQNSKVVHATSQKQEMQTSRRVVNSCYMPESLSRNLSSSLQQTGGSGRLFVRLMEIRNLTIPLASGMTTRFTYTISGKHIQVPWNALHSTTKIENEYTFDESISSSIVCTLRAAYDPPKVRTRSTLGKVFSTNKRKSMTTDPVSEALHGFVSEDGTFGEVTINTDSVSRTALGRCQSMVLPIMNKWTVDPAAKDVKPLPRKVGELEIHVFFLPALPVSLKELPASIESAMYDLKLAEWDRTLLCDGYLCQQGGDCPYWRRRYFQLIGSKLVAFQQFSKVRRATIDLSEATHIVDDNHYSDEEELEGYLYFESGFRIIFSNGDYIDFYAETVGEKDEWMSTLRQHLGQCSMVHKNWTKSFLSLSF.

2 disordered regions span residues Ser-62–Thr-102 and Asp-145–Pro-180. 2 stretches are compositionally biased toward polar residues: residues Tyr-81–Ser-90 and Asn-149–Gly-169. A Phosphoserine modification is found at Ser-379. Residues Thr-583–Gly-688 form the PH domain.

The protein belongs to the BUD4 family.

The protein localises to the cytoplasm. The protein resides in the cell cortex. It localises to the cytoskeleton. In terms of biological role, responsible for the proper stability and function of septins during cytokinesis. Required for the correct formation of the medial septin ring structure in mitosis and for the proper localization of endo-glucanases agn1 and eng1, which are needed for efficient cell separation. May act as a landmark for the localization of hydrolytic proteins to the medial region. The chain is Septin ring organizing protein mid2 (mid2) from Schizosaccharomyces pombe (strain 972 / ATCC 24843) (Fission yeast).